Here is a 333-residue protein sequence, read N- to C-terminus: Complement C1q and tumor necrosis factor-related protein 9A (333 aa).

The N-terminal stretch at 1–19 is a signal peptide; that stretch reads MRIWWLLLAIEICTGNINS. Collagen-like domains are found at residues 24–82, 95–154, and 155–191; these read RQGH…DGKV, GSPG…PGPM, and GPIGKPGPKGEAGPTGPQGEPGVRGIRGWKGDRGEKG. A disordered region spans residues 24 to 188; the sequence is RQGHPGIPGN…GIRGWKGDRG (165 aa). The segment covering 26-40 has biased composition (low complexity); it reads GHPGIPGNPGHNGLP. 4-hydroxyproline occurs at positions 31, 34, and 40. Basic and acidic residues predominate over residues 42–57; that stretch reads RDGRDGAKGDKGDAGE. P58, P61, and P64 each carry 4-hydroxyproline. A compositionally biased stretch (basic and acidic residues) spans 69–88; sequence TSGEKGERGADGKVEAKGIK. A 5-hydroxylysine mark is found at K73 and K127. Residues K73 and K127 are each glycosylated (O-linked (Gal...) hydroxylysine). Residues P151, P160, and P175 each carry the 4-hydroxyproline modification. The region spanning 197 to 333 is the C1q domain; that stretch reads LVLPKSAFTV…FTGFLLFSSP (137 aa).

Multimers (predominantly trimers). Interacts with ADIPOQ via the C1q domain to form a heterotrimeric complex. Interacts with CTRP9B. Forms heterotrimers and heterooligomeric complexes with CTRP9B. Expressed predominantly in adipose tissue.

It is found in the secreted. In terms of biological role, probable adipokine. Activates AMPK, AKT, and p44/42 MAPK signaling pathways. The protein is Complement C1q and tumor necrosis factor-related protein 9A (C1QTNF9) of Homo sapiens (Human).